The sequence spans 136 residues: Aspartate 1-decarboxylase (136 aa).

The active-site Schiff-base intermediate with substrate; via pyruvic acid is Ser-25. Pyruvic acid (Ser) is present on Ser-25. Position 57 (Thr-57) interacts with substrate. Tyr-58 serves as the catalytic Proton donor. Substrate is bound at residue 73 to 75; the sequence is GAA.

This sequence belongs to the PanD family. In terms of assembly, heterooctamer of four alpha and four beta subunits. Requires pyruvate as cofactor. In terms of processing, is synthesized initially as an inactive proenzyme, which is activated by self-cleavage at a specific serine bond to produce a beta-subunit with a hydroxyl group at its C-terminus and an alpha-subunit with a pyruvoyl group at its N-terminus.

The protein localises to the cytoplasm. The catalysed reaction is L-aspartate + H(+) = beta-alanine + CO2. It functions in the pathway cofactor biosynthesis; (R)-pantothenate biosynthesis; beta-alanine from L-aspartate: step 1/1. Its function is as follows. Catalyzes the pyruvoyl-dependent decarboxylation of aspartate to produce beta-alanine. The sequence is that of Aspartate 1-decarboxylase from Corynebacterium efficiens (strain DSM 44549 / YS-314 / AJ 12310 / JCM 11189 / NBRC 100395).